Reading from the N-terminus, the 891-residue chain is Longitudinals lacking protein, isoform G (891 aa).

The 66-residue stretch at 32 to 97 (VDCTLAAEGK…MYRGEVNISQ (66 aa)) folds into the BTB domain. Disordered regions lie at residues 115-200 (LSDN…SSVL) and 228-340 (SSGP…ASAS). Phosphoserine is present on Ser-140. Thr-161 is subject to Phosphothreonine. 2 positions are modified to phosphoserine: Ser-162 and Ser-168. Composition is skewed to low complexity over residues 162 to 175 (SGDV…SSSP), 228 to 251 (SSGP…LTST), 263 to 293 (TSST…QTTS), and 329 to 340 (NSATGPNPASAS). 3 positions are modified to phosphoserine: Ser-372, Ser-375, and Ser-378. Residues 446 to 467 (QDAQQRDPQDLSRKENTAPDVA) form a disordered region. Positions 449 to 462 (QQRDPQDLSRKENT) are enriched in basic and acidic residues. Ser-696 and Ser-705 each carry phosphoserine. Thr-706 is subject to Phosphothreonine. 2 positions are modified to phosphoserine: Ser-749 and Ser-750. The C2H2-type 1; degenerate zinc finger occupies 791–813 (YECRHCGKKYRWKSTLRRHENVE). A C2H2-type 2 zinc finger spans residues 821–843 (HQCPYCPYKSKQRGNLGVHVRKH). Residues 840-891 (VRKHHTDLPQLPSKRRSKYSMNRENGMSGSMSDDSQGKLIIDFNGKGELETK) form a disordered region. The residue at position 874 (Ser-874) is a Phosphoserine.

Expressed in both mesoderm and ectoderm with expression highest in the mesectoderm by stage 11. Becomes enriched in a cluster of brain cells, in abdominal histoblasts, and in the embryonic imaginal disks during later stages.

It is found in the nucleus. In terms of biological role, putative transcription factor required for axon growth and guidance in the central and peripheral nervous systems. Repels CNS axons away from the midline by promoting the expression of the midline repellent sli and its receptor robo. The sequence is that of Longitudinals lacking protein, isoform G from Drosophila melanogaster (Fruit fly).